Consider the following 116-residue polypeptide: Large ribosomal subunit protein bL20 (116 aa).

Belongs to the bacterial ribosomal protein bL20 family.

In terms of biological role, binds directly to 23S ribosomal RNA and is necessary for the in vitro assembly process of the 50S ribosomal subunit. It is not involved in the protein synthesizing functions of that subunit. This chain is Large ribosomal subunit protein bL20, found in Nitratiruptor sp. (strain SB155-2).